The following is a 429-amino-acid chain: Serine--tRNA ligase (429 aa).

234–236 contributes to the L-serine binding site; the sequence is TSE. ATP contacts are provided by residues 265–267 and V281; that span reads RKE. Position 288 (E288) interacts with L-serine. 352–355 is an ATP binding site; that stretch reads ELVS. L-serine is bound at residue T389.

The protein belongs to the class-II aminoacyl-tRNA synthetase family. Type-1 seryl-tRNA synthetase subfamily. As to quaternary structure, homodimer. The tRNA molecule probably binds across the dimer.

It carries out the reaction tRNA(Ser) + L-serine + ATP = L-seryl-tRNA(Ser) + AMP + diphosphate + H(+). It catalyses the reaction tRNA(Sec) + L-serine + ATP = L-seryl-tRNA(Sec) + AMP + diphosphate + H(+). Its pathway is aminoacyl-tRNA biosynthesis; selenocysteinyl-tRNA(Sec) biosynthesis; L-seryl-tRNA(Sec) from L-serine and tRNA(Sec): step 1/1. Functionally, catalyzes the attachment of serine to tRNA(Ser). Is also probably able to aminoacylate tRNA(Sec) with serine, to form the misacylated tRNA L-seryl-tRNA(Sec), which will be further converted into selenocysteinyl-tRNA(Sec). In Encephalitozoon cuniculi (strain GB-M1) (Microsporidian parasite), this protein is Serine--tRNA ligase.